A 174-amino-acid chain; its full sequence is Actin-related protein 2/3 complex subunit 3 (174 aa).

It belongs to the ARPC3 family. Component of the Arp2/3 complex composed of arp2, act2, arc1/p41-ARC, arc2/p34-ARC, arc3/p21-ARC, arc4/p20-ARC and arc5/p16-ARC.

The protein localises to the cytoplasm. Its subcellular location is the cytoskeleton. It is found in the actin patch. In terms of biological role, functions as a component of the Arp2/3 complex which is involved in regulation of actin polymerization and together with an activating nucleation-promoting factor (NPF) mediates the formation of branched actin networks. This Schizosaccharomyces pombe (strain 972 / ATCC 24843) (Fission yeast) protein is Actin-related protein 2/3 complex subunit 3 (arc3).